Consider the following 152-residue polypeptide: CASP-like protein 5C1 (152 aa).

The Cytoplasmic segment spans residues 1 to 12; sequence MVRTTASFGTSS. A helical transmembrane segment spans residues 13-33; sequence SFVLRLGQTLFSSASLLFMCF. At 34 to 44 the chain is on the extracellular side; that stretch reads NDDEDFYAYTT. Residues 45–65 traverse the membrane as a helical segment; sequence FCYLVTVMGLVTPWSVTLALM. At 66-80 the chain is on the cytoplasmic side; the sequence is EAYSILVKKLPMQAT. A helical membrane pass occupies residues 81–101; the sequence is VISVIVAGDFVLSFLSLGGAC. Residues 102 to 126 lie on the Extracellular side of the membrane; sequence STASVAVLLMDAGEKQCDRYKLSAT. Residues 127 to 147 traverse the membrane as a helical segment; sequence MAFLSSFLSFASTFFNFCLLP. Topologically, residues 148–152 are cytoplasmic; that stretch reads SLMSH.

This sequence belongs to the Casparian strip membrane proteins (CASP) family. In terms of assembly, homodimer and heterodimers.

The protein localises to the cell membrane. The sequence is that of CASP-like protein 5C1 from Arabidopsis thaliana (Mouse-ear cress).